The chain runs to 675 residues: Rho GTPase-activating protein 40 (675 aa).

Disordered regions lie at residues 95-118 and 187-218; these read RDEL…EAES and KMSS…PGGL. Over residues 103–116 the composition is skewed to acidic residues; it reads SGGNEGQLPEEGEA. One can recognise a Rho-GAP domain in the interval 323 to 522; it reads VPLDSLLEAD…IMVHYQDLLW (200 aa).

Its function is as follows. GTPase activator for the Rho-type GTPases by converting them to an inactive GDP-bound state. The sequence is that of Rho GTPase-activating protein 40 from Homo sapiens (Human).